We begin with the raw amino-acid sequence, 93 residues long: UPF0367 protein ssl1972 (93 aa).

It belongs to the UPF0367 family.

The chain is UPF0367 protein ssl1972 from Synechocystis sp. (strain ATCC 27184 / PCC 6803 / Kazusa).